The following is a 346-amino-acid chain: Large ribosomal subunit protein uL3 (346 aa).

Positions 324–346 (KPPKKKPPVERPQITYVSRESKQ) are disordered.

The protein belongs to the universal ribosomal protein uL3 family. Part of the 50S ribosomal subunit. Forms a cluster with proteins L14 and L24e.

Functionally, one of the primary rRNA binding proteins, it binds directly near the 3'-end of the 23S rRNA, where it nucleates assembly of the 50S subunit. The polypeptide is Large ribosomal subunit protein uL3 (Thermococcus gammatolerans (strain DSM 15229 / JCM 11827 / EJ3)).